The primary structure comprises 336 residues: Fructose-1,6-bisphosphatase class 1 (336 aa).

Mg(2+) contacts are provided by Glu92, Asp115, Leu117, and Asp118. Residues 118–121 (DGSS), Asn211, Tyr244, 262–264 (YLY), and Lys274 each bind substrate. Glu280 is a binding site for Mg(2+).

This sequence belongs to the FBPase class 1 family. In terms of assembly, homotetramer. Mg(2+) serves as cofactor.

The protein resides in the cytoplasm. The catalysed reaction is beta-D-fructose 1,6-bisphosphate + H2O = beta-D-fructose 6-phosphate + phosphate. It participates in carbohydrate biosynthesis; gluconeogenesis. In Aliivibrio salmonicida (strain LFI1238) (Vibrio salmonicida (strain LFI1238)), this protein is Fructose-1,6-bisphosphatase class 1.